We begin with the raw amino-acid sequence, 391 residues long: Casein kinase II subunit alpha (391 aa).

The tract at residues 36-41 (QDDYQL) is interaction with beta subunit. The region spanning 39 to 324 (YQLVRKLGRG…AREAMEHPYF (286 aa)) is the Protein kinase domain. ATP is bound by residues 45-53 (LGRGKYSEV) and Lys68. The Proton acceptor role is filled by Asp156. Phosphothreonine; by CDK1 occurs at positions 344 and 360. Phosphoserine; by CDK1 occurs at positions 362 and 370.

This sequence belongs to the protein kinase superfamily. Ser/Thr protein kinase family. CK2 subfamily. As to quaternary structure, heterotetramer composed of two catalytic subunits (alpha chain and/or alpha' chain) and two regulatory subunits (beta chains). The tetramer can exist as a combination of 2 alpha/2 beta, 2 alpha'/2 beta or 1 alpha/1 alpha'/2 beta subunits. Also part of a CK2-SPT16-SSRP1 complex composed of SSRP1, SUPT16H, CSNK2A1, CSNK2A2 and CSNK2B, which forms following UV irradiation. Interacts with RNPS1. Interacts with SNAI1. Interacts with PML. Interacts with CCAR2. Interacts with HIRIP3. Post-translationally, phosphorylated at Thr-344, Thr-360, Ser-362 and Ser-370 by CDK1 in prophase and metaphase and dephosphorylated during anaphase. Phosphorylation does not directly affect casein kinase 2 activity, but may contribute to its regulation by forming binding sites for interacting proteins and/or targeting it to different compartments.

It is found in the nucleus. The catalysed reaction is L-seryl-[protein] + ATP = O-phospho-L-seryl-[protein] + ADP + H(+). It carries out the reaction L-threonyl-[protein] + ATP = O-phospho-L-threonyl-[protein] + ADP + H(+). Its activity is regulated as follows. Constitutively active protein kinase whose activity is not directly affected by phosphorylation. Seems to be regulated by level of expression and localization. Its function is as follows. Catalytic subunit of a constitutively active serine/threonine-protein kinase complex that phosphorylates a large number of substrates containing acidic residues C-terminal to the phosphorylated serine or threonine. Regulates numerous cellular processes, such as cell cycle progression, apoptosis and transcription, as well as viral infection. May act as a regulatory node which integrates and coordinates numerous signals leading to an appropriate cellular response. During mitosis, functions as a component of the p53/TP53-dependent spindle assembly checkpoint (SAC) that maintains cyclin-B-CDK1 activity and G2 arrest in response to spindle damage. Also required for p53/TP53-mediated apoptosis, phosphorylating 'Ser-392' of p53/TP53 following UV irradiation. Phosphorylates a number of DNA repair proteins in response to DNA damage, such as MDC1, MRE11, RAD9A, RAD51 and HTATSF1, promoting their recruitment to DNA damage sites. Can also negatively regulate apoptosis. Phosphorylates the caspases CASP9 and CASP2 and the apoptotic regulator NOL3. Phosphorylation protects CASP9 from cleavage and activation by CASP8, and inhibits the dimerization of CASP2 and activation of CASP8. Phosphorylates YY1, protecting YY1 from cleavage by CASP7 during apoptosis. Regulates transcription by direct phosphorylation of RNA polymerases I, II, III and IV. Also phosphorylates and regulates numerous transcription factors including NF-kappa-B, STAT1, CREB1, IRF1, IRF2, ATF1, ATF4, SRF, MAX, JUN, FOS, MYC and MYB. Phosphorylates Hsp90 and its co-chaperones FKBP4 and CDC37, which is essential for chaperone function. Mediates sequential phosphorylation of FNIP1, promoting its gradual interaction with Hsp90, leading to activate both kinase and non-kinase client proteins of Hsp90. Regulates Wnt signaling by phosphorylating CTNNB1 and the transcription factor LEF1. Acts as an ectokinase that phosphorylates several extracellular proteins. Phosphorylates PML at 'Ser-565' and primes it for ubiquitin-mediated degradation. Plays an important role in the circadian clock function by phosphorylating BMAL1 at 'Ser-90' which is pivotal for its interaction with CLOCK and which controls CLOCK nuclear entry. Phosphorylates FMR1, promoting FMR1-dependent formation of a membraneless compartment. May phosphorylate histone H2A on 'Ser-1'. The sequence is that of Casein kinase II subunit alpha (CSNK2A1) from Oryctolagus cuniculus (Rabbit).